Here is a 317-residue protein sequence, read N- to C-terminus: Heme A synthase (317 aa).

Residues 1 to 6 (MQRSLK) are Cytoplasmic-facing. The helical transmembrane segment at 7-27 (WFASTTTVAMLFVLIGGALVT) threads the bilayer. The Extracellular portion of the chain corresponds to 28-54 (KTDSGMGCGRSWPLCHGQWIPDDITPQ). Cys35 and Cys42 form a disulfide bridge. The chain crosses the membrane as a helical span at residues 55–75 (LVIELSHRLVSGLAAIMVLIL). Glu58 is a catalytic residue. His61 is a binding site for heme o. Over 76 to 91 (CIRSWRVMGHVRETKP) the chain is Cytoplasmic. A helical transmembrane segment spans residues 92-112 (LAVLSFVFLVLQSLIGAAAVV). Topologically, residues 113–123 (WGQSDFVMALH) are extracellular. His123 provides a ligand contact to heme o. The chain crosses the membrane as a helical span at residues 124–144 (FGISLISFAAVLLLTLLIFVV). Over 145–159 (DKKFSPTSLQLDGQM) the chain is Cytoplasmic. Residues 160–180 (RFHIYGIIIYSYLVVYTGALV) traverse the membrane as a helical segment. The Extracellular portion of the chain corresponds to 181 to 214 (RHTNASLACPSWPLCAKSRLLPVQFHEWVQMGHR). A disulfide bond links Cys189 and Cys195. His213 provides a ligand contact to heme b. A helical transmembrane segment spans residues 215 to 235 (LAAAVIIIWIAVATVHAARYY). Over 236–243 (REQPVIYY) the chain is Cytoplasmic. The chain crosses the membrane as a helical span at residues 244–264 (GWIISLLLVLAQMVTGALVVF). Over 265 to 272 (TELNLYIS) the chain is Extracellular. The chain crosses the membrane as a helical span at residues 273–293 (LAHAFFISCLFGVLSYLLLLA). His275 provides a ligand contact to heme b. Over 294–317 (LRTRRRPATAAGRSVEDTASAPLK) the chain is Cytoplasmic.

The protein belongs to the COX15/CtaA family. Type 1 subfamily. In terms of assembly, interacts with CtaB. Heme b is required as a cofactor.

It localises to the cell membrane. The catalysed reaction is Fe(II)-heme o + 2 A + H2O = Fe(II)-heme a + 2 AH2. The protein operates within porphyrin-containing compound metabolism; heme A biosynthesis; heme A from heme O: step 1/1. Catalyzes the conversion of heme O to heme A by two successive hydroxylations of the methyl group at C8. The first hydroxylation forms heme I, the second hydroxylation results in an unstable dihydroxymethyl group, which spontaneously dehydrates, resulting in the formyl group of heme A. The polypeptide is Heme A synthase (Geobacillus thermodenitrificans).